Consider the following 351-residue polypeptide: Protein-glutamate methylesterase/protein-glutamine glutaminase 2 (351 aa).

Positions 4–121 (KVLVVDDSAL…PQDFNEYQDL (118 aa)) constitute a Response regulatory domain. Position 55 is a 4-aspartylphosphate (Asp55). Residues 156-348 (RVINTQLVAI…DKMLNYLASL (193 aa)) enclose the CheB-type methylesterase domain. Catalysis depends on residues Ser168, His194, and Asp290.

The protein belongs to the CheB family. Post-translationally, phosphorylated by CheA. Phosphorylation of the N-terminal regulatory domain activates the methylesterase activity.

The protein resides in the cytoplasm. It catalyses the reaction [protein]-L-glutamate 5-O-methyl ester + H2O = L-glutamyl-[protein] + methanol + H(+). The catalysed reaction is L-glutaminyl-[protein] + H2O = L-glutamyl-[protein] + NH4(+). Involved in chemotaxis. Part of a chemotaxis signal transduction system that modulates chemotaxis in response to various stimuli. Catalyzes the demethylation of specific methylglutamate residues introduced into the chemoreceptors (methyl-accepting chemotaxis proteins or MCP) by CheR. Also mediates the irreversible deamidation of specific glutamine residues to glutamic acid. This is Protein-glutamate methylesterase/protein-glutamine glutaminase 2 from Shewanella sp. (strain MR-7).